Consider the following 725-residue polypeptide: Fatty acid oxidation complex subunit alpha (725 aa).

Residues 1 to 189 (MLYKGDTLYL…KIGLVDGVVK (189 aa)) are enoyl-CoA hydratase/isomerase. D296 contacts substrate. Positions 311–725 (ETPKQAAVLG…RLNQPVRLVL (415 aa)) are 3-hydroxyacyl-CoA dehydrogenase. NAD(+) contacts are provided by residues M324, D343, 400 to 402 (VVE), K407, and S429. The For 3-hydroxyacyl-CoA dehydrogenase activity role is filled by H450. Residue N453 participates in NAD(+) binding. 2 residues coordinate substrate: N500 and Y660.

This sequence in the N-terminal section; belongs to the enoyl-CoA hydratase/isomerase family. In the C-terminal section; belongs to the 3-hydroxyacyl-CoA dehydrogenase family. As to quaternary structure, heterotetramer of two alpha chains (FadB) and two beta chains (FadA).

The enzyme catalyses a (3S)-3-hydroxyacyl-CoA + NAD(+) = a 3-oxoacyl-CoA + NADH + H(+). The catalysed reaction is a (3S)-3-hydroxyacyl-CoA = a (2E)-enoyl-CoA + H2O. It catalyses the reaction a 4-saturated-(3S)-3-hydroxyacyl-CoA = a (3E)-enoyl-CoA + H2O. It carries out the reaction (3S)-3-hydroxybutanoyl-CoA = (3R)-3-hydroxybutanoyl-CoA. The enzyme catalyses a (3Z)-enoyl-CoA = a 4-saturated (2E)-enoyl-CoA. The catalysed reaction is a (3E)-enoyl-CoA = a 4-saturated (2E)-enoyl-CoA. Its pathway is lipid metabolism; fatty acid beta-oxidation. Its function is as follows. Involved in the aerobic and anaerobic degradation of long-chain fatty acids via beta-oxidation cycle. Catalyzes the formation of 3-oxoacyl-CoA from enoyl-CoA via L-3-hydroxyacyl-CoA. It can also use D-3-hydroxyacyl-CoA and cis-3-enoyl-CoA as substrate. The protein is Fatty acid oxidation complex subunit alpha of Salmonella paratyphi A (strain ATCC 9150 / SARB42).